The following is a 336-amino-acid chain: Ketol-acid reductoisomerase (NADP(+)) 1 (336 aa).

One can recognise a KARI N-terminal Rossmann domain in the interval alanine 2 to threonine 181. NADP(+) is bound by residues tyrosine 25–glutamine 28, arginine 48, serine 52, and aspartate 82–glutamine 85. Residue histidine 107 is part of the active site. An NADP(+)-binding site is contributed by glycine 133. A KARI C-terminal knotted domain is found at threonine 182–valine 327. Residues aspartate 190, glutamate 194, glutamate 226, and glutamate 230 each coordinate Mg(2+). Serine 251 contacts substrate.

Belongs to the ketol-acid reductoisomerase family. The cofactor is Mg(2+).

It carries out the reaction (2R)-2,3-dihydroxy-3-methylbutanoate + NADP(+) = (2S)-2-acetolactate + NADPH + H(+). It catalyses the reaction (2R,3R)-2,3-dihydroxy-3-methylpentanoate + NADP(+) = (S)-2-ethyl-2-hydroxy-3-oxobutanoate + NADPH + H(+). It functions in the pathway amino-acid biosynthesis; L-isoleucine biosynthesis; L-isoleucine from 2-oxobutanoate: step 2/4. The protein operates within amino-acid biosynthesis; L-valine biosynthesis; L-valine from pyruvate: step 2/4. Its function is as follows. Involved in the biosynthesis of branched-chain amino acids (BCAA). Catalyzes an alkyl-migration followed by a ketol-acid reduction of (S)-2-acetolactate (S2AL) to yield (R)-2,3-dihydroxy-isovalerate. In the isomerase reaction, S2AL is rearranged via a Mg-dependent methyl migration to produce 3-hydroxy-3-methyl-2-ketobutyrate (HMKB). In the reductase reaction, this 2-ketoacid undergoes a metal-dependent reduction by NADPH to yield (R)-2,3-dihydroxy-isovalerate. The protein is Ketol-acid reductoisomerase (NADP(+)) 1 of Bacillus thuringiensis subsp. konkukian (strain 97-27).